The following is a 201-amino-acid chain: Glycerol-3-phosphate acyltransferase (201 aa).

The next 6 membrane-spanning stretches (helical) occupy residues Thr3–Ser23, Lys51–Val71, Val85–Val105, Val116–Ala136, Tyr137–Tyr157, and Gly158–Val178.

It belongs to the PlsY family. In terms of assembly, probably interacts with PlsX.

The protein resides in the cell inner membrane. The enzyme catalyses an acyl phosphate + sn-glycerol 3-phosphate = a 1-acyl-sn-glycero-3-phosphate + phosphate. The protein operates within lipid metabolism; phospholipid metabolism. Catalyzes the transfer of an acyl group from acyl-phosphate (acyl-PO(4)) to glycerol-3-phosphate (G3P) to form lysophosphatidic acid (LPA). This enzyme utilizes acyl-phosphate as fatty acyl donor, but not acyl-CoA or acyl-ACP. In Janthinobacterium sp. (strain Marseille) (Minibacterium massiliensis), this protein is Glycerol-3-phosphate acyltransferase.